The following is a 177-amino-acid chain: uncharacterized protein (177 aa).

Helical transmembrane passes span 4–24 (IIIL…GFIL), 33–53 (ILSI…LHWI), 80–100 (IAFI…GSFL), and 115–135 (MLGA…LLYV).

It localises to the cell membrane. This is an uncharacterized protein from Bacillus subtilis (strain 168).